A 239-amino-acid polypeptide reads, in one-letter code: LRRN4 C-terminal-like protein (239 aa).

A signal peptide spans 1–19 (MLGSLSLLWLAAMTTSLVS). The Extracellular portion of the chain corresponds to 20 to 194 (QPQILTLEDY…KFIMPPKPVT (175 aa)). The 98-residue stretch at 82–179 (QPEPPRLGEV…EGPENWTGPS (98 aa)) folds into the Fibronectin type-III domain. Asn-132 and Asn-174 each carry an N-linked (GlcNAc...) asparagine glycan. A helical transmembrane segment spans residues 195-215 (LVYAAVGVGTALALLSCAALV). The Cytoplasmic portion of the chain corresponds to 216-239 (WHFCLRERWGCPRRQGMAQASEAL).

The protein resides in the membrane. The protein is LRRN4 C-terminal-like protein (Lrrn4cl) of Mus musculus (Mouse).